The primary structure comprises 251 residues: 2,3-bisphosphoglycerate-dependent phosphoglycerate mutase (251 aa).

Residues 11–18 (RHGNSDWN), 24–25 (TG), Arg63, 90–93 (ERHY), Lys101, 117–118 (RR), and 185–186 (GN) each bind substrate. His12 serves as the catalytic Tele-phosphohistidine intermediate. The active-site Proton donor/acceptor is the Glu90.

This sequence belongs to the phosphoglycerate mutase family. BPG-dependent PGAM subfamily.

It catalyses the reaction (2R)-2-phosphoglycerate = (2R)-3-phosphoglycerate. It functions in the pathway carbohydrate degradation; glycolysis; pyruvate from D-glyceraldehyde 3-phosphate: step 3/5. Its function is as follows. Catalyzes the interconversion of 2-phosphoglycerate and 3-phosphoglycerate. This chain is 2,3-bisphosphoglycerate-dependent phosphoglycerate mutase, found in Clavibacter sepedonicus (Clavibacter michiganensis subsp. sepedonicus).